A 962-amino-acid polypeptide reads, in one-letter code: MAAQRIRAANASGLPRCKSEGTLIDLSEGFSETSFNDVKVPSPSALLVDNPTPFGNAKEVIAIKDYCPNNFTTLKFSKGDHLYVLDTSGGEWWYAHNTTEMGYIPSSYVQPLNYRNSTLSDSGMIDNLPDSPEEVAKELDLLGGGWTDDQKESGRPYSNNPFWNGVRTNPFLNGNAQPSTDELNPKSTVDLLLFDTGTSSFTESSSATTNSTGNIFDELPATNGLQVEQPVKRDNPFFRSKRSYSLSELSVLQAKSDAPPTSSFFTGLKSPVPEQFQSREDFRTAWLNHRKLARSCHDLDLLGQSPGWGQTQAVETNIVCKLDSSGGSVQLPDTNISIHVPEGHVAPGETQQISMKALLDPPLDLNSDRSTSVSPVVEVKLSNLEVSTFIILEMKVSAEVKGDIFSKSTVVLQCLRSDSKEGPYVPIPLAYSYGDTIQVQLDNLEPCMYLAIVAQGPNILYPSTVWDFINKRVTVGLYGPKHIHPSFKTVVTIFGHDCAPKTLLVSEVTRQAPSPAPVALQLWGKHQFILSRPQDLRVCMFSNMTNYEVKANEQARVVRGFQMKLGKVSRLIFSVISQNPNELSDFTLRVQVKDDQDTILTQFCVQTPQPPPKSAIKPSGQRRFLKKNEVGKIILSPFVVTTKYPTFQDRPVSSLKFGKLLKTVVRQNKSHYLLEYKKGDVVALLSEERIRLKGQLWTKEWYIGYYQGKVGLVHTKNVLVVGKARPSLFSGPELSTSVLLEQILRPCKFLTYIYASVRTLLMENISSWRAFADALGYGNLPLTFFCRAELDSEPERVASVLEKLKEDCNNPDNKDRKSFQKELVMALLKMDCQGLVVRLIQDFVLLTTAVEVAQRWRELAEKLAKVSKQQMDAYESPHRDRNGVVDSEAMWKPAYDFLLTWSHQIGDSYRDVIQELHIGLDKMKNPITRRWKHLTGTLILVNSLDILRAAAFSPADHDDFVI.

Positions 55-114 (GNAKEVIAIKDYCPNNFTTLKFSKGDHLYVLDTSGGEWWYAHNTTEMGYIPSSYVQPLNY) constitute an SH3 1 domain. Ser-131, Ser-245, Ser-250, Ser-278, and Ser-295 each carry phosphoserine. In terms of domain architecture, ZU5 spans 316–453 (TNIVCKLDSS…LEPCMYLAIV (138 aa)). At Ser-636 the chain carries Phosphoserine. Residues 653–723 (SSLKFGKLLK…HTKNVLVVGK (71 aa)) enclose the SH3 2 domain.

As to quaternary structure, homodimer or homooligomer. Interacts with DNM2, EPS15, clathrin, the adapter protein complex 2/AP-2 and TFRC. Interacts with the Rag GTPases RRAGA, RRAGB, RRAGC and RRAGD; the interaction is most probably direct, preferentially occurs with their inactive GDP-bound form and is negatively regulated by amino acids. In terms of processing, phosphorylated upon EGF stimulation. Phosphorylation prevents interaction with DNM2.

It is found in the membrane. The protein resides in the clathrin-coated pit. Its subcellular location is the cytoplasmic vesicle. It localises to the clathrin-coated vesicle. The protein localises to the nucleus. In terms of biological role, may function in transferrin receptor internalization at the plasma membrane through a cargo-specific control of clathrin-mediated endocytosis. Alternatively, may act as a negative regulator of the amino acid-induced TOR signaling by inhibiting the formation of active Rag GTPase complexes. Preferentially binds inactive Rag GTPase complexes and prevents their interaction with the mTORC1 complex inhibiting its relocalization to lysosomes and its activation. Thereby, may indirectly regulate cell growth, proliferation and autophagy. The polypeptide is SH3 domain-binding protein 4 (Sh3bp4) (Mus musculus (Mouse)).